Reading from the N-terminus, the 105-residue chain is Endogenous retrovirus group K member 16 Rec protein (105 aa).

The tract at residues Met1 to Ser41 is disordered. Residues Ala10–Arg20 are compositionally biased toward basic residues. The short motif at Arg13–Arg20 is the Nuclear localization signal element. The Nuclear export signal motif lies at Trp50–Leu59.

In terms of assembly, forms homodimers, homotrimers, and homotetramers via a C-terminal domain. Associates with XPO1 and with ZNF145.

It localises to the cytoplasm. It is found in the nucleus. The protein resides in the nucleolus. In terms of biological role, retroviral replication requires the nuclear export and translation of unspliced, singly-spliced and multiply-spliced derivatives of the initial genomic transcript. Rec interacts with a highly structured RNA element (RcRE) present in the viral 3'LTR and recruits the cellular nuclear export machinery. This permits export to the cytoplasm of unspliced genomic or incompletely spliced subgenomic viral transcripts. The chain is Endogenous retrovirus group K member 16 Rec protein (ERVK-16) from Homo sapiens (Human).